The primary structure comprises 715 residues: Fatty acid oxidation complex subunit alpha (715 aa).

An enoyl-CoA hydratase region spans residues 1–190 (MTTTSAFMLN…KAGLVDDVVP (190 aa)). Positions 306–714 (GPLNSVGILG…FWTNGETDQG (409 aa)) are 3-hydroxyacyl-CoA dehydrogenase.

The protein in the N-terminal section; belongs to the enoyl-CoA hydratase/isomerase family. This sequence in the central section; belongs to the 3-hydroxyacyl-CoA dehydrogenase family. In terms of assembly, heterotetramer of two alpha chains (FadJ) and two beta chains (FadI).

Its subcellular location is the cytoplasm. The catalysed reaction is a (3S)-3-hydroxyacyl-CoA = a (2E)-enoyl-CoA + H2O. The enzyme catalyses a 4-saturated-(3S)-3-hydroxyacyl-CoA = a (3E)-enoyl-CoA + H2O. It carries out the reaction a (3S)-3-hydroxyacyl-CoA + NAD(+) = a 3-oxoacyl-CoA + NADH + H(+). It catalyses the reaction (3S)-3-hydroxybutanoyl-CoA = (3R)-3-hydroxybutanoyl-CoA. It participates in lipid metabolism; fatty acid beta-oxidation. Its function is as follows. Catalyzes the formation of a hydroxyacyl-CoA by addition of water on enoyl-CoA. Also exhibits 3-hydroxyacyl-CoA epimerase and 3-hydroxyacyl-CoA dehydrogenase activities. This Salmonella paratyphi A (strain ATCC 9150 / SARB42) protein is Fatty acid oxidation complex subunit alpha.